Consider the following 121-residue polypeptide: N-alpha-acetyltransferase 38, NatC auxiliary subunit (121 aa).

In terms of domain architecture, Sm spans 40-113; it reads PGRRKLQKWL…IVSLSIDEPD (74 aa).

The protein belongs to the snRNP Sm proteins family. Component of the N-terminal acetyltransferase C (NatC) complex, which is composed of Naa35, Sbat/Naa38 and Naa30A. Interacts with Smn and Hez; along with Hez and Vlet, may form an accessory subcomplex involved in SMN complex function.

The protein resides in the cytoplasm. Its subcellular location is the nucleus. Auxiliary component of the N-terminal acetyltransferase C (NatC) complex which catalyzes acetylation of N-terminal methionine residues. May have an accessory function in the survival motor neuron (SMN) complex. This is N-alpha-acetyltransferase 38, NatC auxiliary subunit from Drosophila melanogaster (Fruit fly).